The primary structure comprises 639 residues: Chaperone protein DnaK (639 aa).

Residue Thr-198 is modified to Phosphothreonine; by autocatalysis. Residues 603–618 (AKAQTQGGAQEGAAKQ) are compositionally biased toward low complexity. Residues 603–639 (AKAQTQGGAQEGAAKQSNATADDVVDAEFEEVKDDKK) form a disordered region. Acidic residues predominate over residues 625–639 (DVVDAEFEEVKDDKK).

Belongs to the heat shock protein 70 family.

In terms of biological role, acts as a chaperone. This chain is Chaperone protein DnaK, found in Shewanella sp. (strain MR-4).